The primary structure comprises 40 residues: Photosystem II reaction center protein J (40 aa).

The chain crosses the membrane as a helical span at residues 8–28 (IPLWLIGTVAGIPVIGSVGVF).

The protein belongs to the PsbJ family. In terms of assembly, PSII is composed of 1 copy each of membrane proteins PsbA, PsbB, PsbC, PsbD, PsbE, PsbF, PsbH, PsbI, PsbJ, PsbK, PsbL, PsbM, PsbT, PsbX, PsbY, PsbZ, Psb30/Ycf12, at least 3 peripheral proteins of the oxygen-evolving complex and a large number of cofactors. It forms dimeric complexes.

Its subcellular location is the plastid. It localises to the chloroplast thylakoid membrane. Functionally, one of the components of the core complex of photosystem II (PSII). PSII is a light-driven water:plastoquinone oxidoreductase that uses light energy to abstract electrons from H(2)O, generating O(2) and a proton gradient subsequently used for ATP formation. It consists of a core antenna complex that captures photons, and an electron transfer chain that converts photonic excitation into a charge separation. The sequence is that of Photosystem II reaction center protein J from Acorus calamus (Sweet flag).